A 99-amino-acid chain; its full sequence is Bublin coiled-coil protein (99 aa).

Positions 34–71 (LDQINSCLDDIEERNDALNGKLQELLESNRAARRDFRQ) form a coiled coil. Basic and acidic residues predominate over residues 66-78 (RRDFRQQITDHAD). The interval 66-99 (RRDFRQQITDHADLPPPANDDDEDEQSRDAQKKD) is disordered.

This sequence belongs to the UPF0184 (EST00098) family.

The protein resides in the cell junction. It is found in the cytoplasm. Its subcellular location is the cytoskeleton. Essential for intermediate filament organization in intestinal cells, interacts with intermediate filament and regulates intestinal lumen morphology. The polypeptide is Bublin coiled-coil protein (bbln) (Danio rerio (Zebrafish)).